The primary structure comprises 118 residues: Small ribosomal subunit protein uS13 (118 aa).

Residues 94–118 are disordered; it reads GLPLRGQRTKTNARTRKGPRKPIRK.

It belongs to the universal ribosomal protein uS13 family. Part of the 30S ribosomal subunit. Forms a loose heterodimer with protein S19. Forms two bridges to the 50S subunit in the 70S ribosome.

Its function is as follows. Located at the top of the head of the 30S subunit, it contacts several helices of the 16S rRNA. In the 70S ribosome it contacts the 23S rRNA (bridge B1a) and protein L5 of the 50S subunit (bridge B1b), connecting the 2 subunits; these bridges are implicated in subunit movement. Contacts the tRNAs in the A and P-sites. This chain is Small ribosomal subunit protein uS13, found in Chromohalobacter salexigens (strain ATCC BAA-138 / DSM 3043 / CIP 106854 / NCIMB 13768 / 1H11).